The sequence spans 130 residues: Small ribosomal subunit protein uS8 (130 aa).

The protein belongs to the universal ribosomal protein uS8 family. Part of the 30S ribosomal subunit.

One of the primary rRNA binding proteins, it binds directly to 16S rRNA central domain where it helps coordinate assembly of the platform of the 30S subunit. The chain is Small ribosomal subunit protein uS8 from Methanothermococcus thermolithotrophicus (Methanococcus thermolithotrophicus).